The sequence spans 705 residues: Ribosomal RNA large subunit methyltransferase K/L (705 aa).

The region spanning 43–154 is the THUMP domain; the sequence is VVYRCCLWSR…GEKGILGFDL (112 aa).

Belongs to the methyltransferase superfamily. RlmKL family.

It is found in the cytoplasm. It carries out the reaction guanosine(2445) in 23S rRNA + S-adenosyl-L-methionine = N(2)-methylguanosine(2445) in 23S rRNA + S-adenosyl-L-homocysteine + H(+). The enzyme catalyses guanosine(2069) in 23S rRNA + S-adenosyl-L-methionine = N(2)-methylguanosine(2069) in 23S rRNA + S-adenosyl-L-homocysteine + H(+). Its function is as follows. Specifically methylates the guanine in position 2445 (m2G2445) and the guanine in position 2069 (m7G2069) of 23S rRNA. This is Ribosomal RNA large subunit methyltransferase K/L from Aliivibrio fischeri (strain MJ11) (Vibrio fischeri).